A 418-amino-acid chain; its full sequence is Putative ion-transport protein YfeO (418 aa).

The next 12 helical transmembrane spans lie at 10-30, 54-74, 99-119, 120-140, 149-169, 186-206, 223-243, 258-278, 300-320, 322-342, 343-363, and 371-391; these read LLLSLPAVAIGIASSLILIVV, DSPLWIIGVLTLTGIAVGLVI, ALPGLIVALILGLAGGVSLGP, EHPIMTVNIALAVAIGARLLP, ILASAGTIGALFGTPVAAALI, LFAPLMAAAAGALTTGLFFHP, ILSGAIVAAIAIAAGMVAVWC, VLVLGIGGFILGILGVIGGPV, DYFLLAVIKLAALVVAAASGF, GGRIFPAVFVGVALGLMLHEH, VPAVPAAITVSCAILGIVLVV, and LFMAAVVVPNTTLLPLLCIVM.

Belongs to the chloride channel (TC 2.A.49) family.

The protein resides in the cell membrane. The polypeptide is Putative ion-transport protein YfeO (Escherichia coli (strain 55989 / EAEC)).